Reading from the N-terminus, the 317-residue chain is Inactive serine protease 45 (317 aa).

An N-terminal signal peptide occupies residues 1–35 (MATSLRGLDAGPGSLRRWILICFAALLLLPPRPNL). Asn40 is a glycosylation site (N-linked (GlcNAc...) asparagine). Residues 44–291 (PVCGTPWWPD…YTIWIKDQVS (248 aa)) form the Peptidase S1 domain. Cys75 and Cys91 are disulfide-bonded. The N-linked (GlcNAc...) asparagine glycan is linked to Asn110. 3 disulfides stabilise this stretch: Cys172/Cys249, Cys207/Cys230, and Cys239/Cys267. Asn272 is a glycosylation site (N-linked (GlcNAc...) asparagine).

It belongs to the peptidase S1 family.

It is found in the secreted. The sequence is that of Inactive serine protease 45 from Mus musculus (Mouse).